Here is a 280-residue protein sequence, read N- to C-terminus: MRWPPWSSKTQEPTIADDKQQNCTSLLPVTTNQTDKAAILDWAAFTELRTLIPTLILTTAILSAARFHRSYLRRFPDAPSIDAAYFRRRSIYGKVTSVGDGDNFRIFHTPGGRLAGWELLPWKRIPKGKKELRDNTIHVRLAGIDAPELAHFGRPEQPYAREAHEWLTSYLLSRRVRAYLHRPDQYQRVVATVYVRRVLDFPIPFRRRDVSYEMLRRGLATVYEAKSGAEFGGDAIEAKYRNAEWWAKLKGNGMWKGFRRNKEFESPREYKTRVGLEEKK.

A helical membrane pass occupies residues 50 to 67 (TLIPTLILTTAILSAARF). A TNase-like domain is found at 89 to 257 (RSIYGKVTSV…KLKGNGMWKG (169 aa)). Residue Arg140 is part of the active site. Residue Asp145 participates in Ca(2+) binding. Residues Glu148 and Arg188 contribute to the active site.

This sequence belongs to the LCL3 family.

The protein resides in the mitochondrion. The protein localises to the membrane. The chain is Probable endonuclease lcl3 (lcl3) from Emericella nidulans (strain FGSC A4 / ATCC 38163 / CBS 112.46 / NRRL 194 / M139) (Aspergillus nidulans).